Here is a 252-residue protein sequence, read N- to C-terminus: MAHLGYWMLLLFVATWSDVGLCKKRPKPGGGWNTGGSRYPGQSSPGGNRYPPQGGGWGQPHGGGWGQPHGGGWGQPHGGGWGQPHGGGWGQGGTHNQWGKPSKPKTSMKHVAGAAAAGAVVGGLGGYMLGSAMSRPLIHFGNDYEDRYYRENMYRYPNQVYYRPVDQYSNQNSFVHDCVNITVKQHTVTTTTKGENFTETDIKIMERVVEQMCITQYQQESQAAYQRAAGVLLFSSPPVILLISFLIFLIVG.

An N-terminal signal peptide occupies residues 1–28; it reads MAHLGYWMLLLFVATWSDVGLCKKRPKP. The tract at residues 23–229 is interaction with GRB2, ERI3 and SYN1; that stretch reads KKRPKPGGGW…ESQAAYQRAA (207 aa). The segment at 26–109 is disordered; that stretch reads PKPGGGWNTG…KPSKPKTSMK (84 aa). 5 consecutive repeat copies span residues 51-59, 60-67, 68-75, 76-83, and 84-92. Residues 51–92 are 5 X 8 AA tandem repeats of P-H-G-G-G-W-G-Q; it reads PPQGGGWGQPHGGGWGQPHGGGWGQPHGGGWGQPHGGGWGQG. A compositionally biased stretch (gly residues) spans 53–93; the sequence is QGGGWGQPHGGGWGQPHGGGWGQPHGGGWGQPHGGGWGQGG. Residues H61, G62, G63, H69, G70, G71, H77, G78, G79, H85, G86, and G87 each contribute to the Cu(2+) site. A disulfide bridge links C178 with C213. N180 and N196 each carry an N-linked (GlcNAc...) asparagine glycan. A lipid anchor (GPI-anchor amidated alanine) is attached at A229. A propeptide spans 230 to 252 (removed in mature form); it reads GVLLFSSPPVILLISFLIFLIVG.

The protein belongs to the prion family. Monomer and homodimer. Has a tendency to aggregate into amyloid fibrils containing a cross-beta spine, formed by a steric zipper of superposed beta-strands. Soluble oligomers may represent an intermediate stage on the path to fibril formation. Copper binding may promote oligomerization. Interacts with GRB2, APP, ERI3/PRNPIP and SYN1. Mislocalized cytosolically exposed PrP interacts with MGRN1; this interaction alters MGRN1 subcellular location and causes lysosomal enlargement. Interacts with KIAA1191.

The protein resides in the cell membrane. It localises to the golgi apparatus. In terms of biological role, its primary physiological function is unclear. Has cytoprotective activity against internal or environmental stresses. May play a role in neuronal development and synaptic plasticity. May be required for neuronal myelin sheath maintenance. May play a role in iron uptake and iron homeostasis. Soluble oligomers are toxic to cultured neuroblastoma cells and induce apoptosis (in vitro). Association with GPC1 (via its heparan sulfate chains) targets PRNP to lipid rafts. Also provides Cu(2+) or Zn(2+) for the ascorbate-mediated GPC1 deaminase degradation of its heparan sulfate side chains. This chain is Major prion protein (PRNP), found in Oryctolagus cuniculus (Rabbit).